The following is a 377-amino-acid chain: Flagellin D (377 aa).

Coiled-coil stretches lie at residues 103 to 129 (SNSKSERVAIQEEITALNDELNRIAET) and 310 to 339 (AFQNRFNHAISNLDNINENVNASKSRIKDT).

This sequence belongs to the bacterial flagellin family. As to quaternary structure, heteromer of multiple flagellin subunits including FlaA, FlaB, FlaC, FlaD and FlaE.

It localises to the secreted. The protein localises to the bacterial flagellum. Its function is as follows. Flagellin is the subunit protein which polymerizes to form the filaments of bacterial flagella. FlaD is not essential for flagellar synthesis and motility. This chain is Flagellin D (flaD), found in Vibrio cholerae serotype O1 (strain ATCC 39315 / El Tor Inaba N16961).